We begin with the raw amino-acid sequence, 535 residues long: UDP-glucuronosyltransferase 1A1 (535 aa).

Positions 1–29 (MTVVCWSSRLLLLLPYLLLCVFGPSASHA) are cleaved as a signal peptide. Residues asparagine 89, asparagine 297, and asparagine 435 are each glycosylated (N-linked (GlcNAc...) asparagine). Residues 493 to 509 (VIGFLLAIVLTVVFIVF) form a helical membrane-spanning segment.

It belongs to the UDP-glycosyltransferase family. As to quaternary structure, homodimers. Homooligomer. Interacts with UGT1A3, UGT1A4, UGT1A6, UGT1A7, UGT1A8, UGT1A9 and UGT1A10 to form heterodimers. As to expression, highly expressed in liver and at lower levels in colon, kidney, stomach and intestine.

The protein localises to the endoplasmic reticulum membrane. The catalysed reaction is glucuronate acceptor + UDP-alpha-D-glucuronate = acceptor beta-D-glucuronoside + UDP + H(+). It carries out the reaction 17beta-estradiol + UDP-alpha-D-glucuronate = 17beta-estradiol 3-O-(beta-D-glucuronate) + UDP + H(+). It catalyses the reaction 2-hydroxyestrone + UDP-alpha-D-glucuronate = 2-hydroxyestrone 3-O-(beta-D-glucuronate) + UDP + H(+). The enzyme catalyses 2-hydroxy-17beta-estradiol + UDP-alpha-D-glucuronate = 2-hydroxy-17beta-estradiol 3-O-(beta-D-glucuronate) + UDP + H(+). The catalysed reaction is 2-methoxy-17beta-estradiol + UDP-alpha-D-glucuronate = 2-methoxy-17beta-estradiol 3-O-(beta-D-glucuronate) + UDP + H(+). It carries out the reaction 17alpha-estradiol + UDP-alpha-D-glucuronate = 17alpha-estradiol 3-O-(beta-D-glucuronate) + UDP + H(+). It catalyses the reaction 16beta,17beta-estriol + UDP-alpha-D-glucuronate = 16beta,17beta-estriol 16-O-(beta-D-glucuronate) + UDP + H(+). The enzyme catalyses losartan + UDP-alpha-D-glucuronate = losartan-2-N-beta-D-glucuronide + UDP. The catalysed reaction is prunetin + UDP-alpha-D-glucuronate = prunetin-4'-O-beta-D-glucuronide + UDP. It carries out the reaction SN-38 + UDP-alpha-D-glucuronate = SN-38 O-beta-D-glucuronide + UDP + H(+). It catalyses the reaction (4Z,15Z)-bilirubin IXalpha + UDP-alpha-D-glucuronate = (4Z,15Z)-bilirubin IXalpha C12-beta-D-glucuronoside + UDP. The enzyme catalyses (4Z,15Z)-bilirubin IXalpha + UDP-alpha-D-glucuronate = (4Z,15Z)-bilirubin IXalpha C8-beta-D-glucuronoside + UDP. The catalysed reaction is (4Z,15Z)-bilirubin IXalpha C8-beta-D-glucuronoside + UDP-alpha-D-glucuronate = (4Z,15Z)-bilirubin IXalpha C8,C12-beta-D-bisglucuronoside + UDP. It carries out the reaction (4Z,15Z)-bilirubin IXalpha C12-beta-D-glucuronoside + UDP-alpha-D-glucuronate = (4Z,15Z)-bilirubin IXalpha C8,C12-beta-D-bisglucuronoside + UDP. It catalyses the reaction 8-iso-prostaglandin F2alpha + UDP-alpha-D-glucuronate = 8-iso-prostaglandin F2alpha-glucuronide + UDP + H(+). The enzyme catalyses (5Z,8Z,11Z,14Z)-eicosatetraenoate + UDP-alpha-D-glucuronate = O-[(5Z),(8Z),(11Z),(14Z)-eicosatetraenoyl]-beta-D-glucuronate + UDP. The catalysed reaction is 15-hydroxy-(5Z,8Z,11Z,13E)-eicosatetraenoate + UDP-alpha-D-glucuronate = 15-O-(beta-D-glucuronosyl)-(5Z,8Z,11Z,14Z)-eicosatetraenoate + UDP + H(+). It carries out the reaction 20-hydroxy-(5Z,8Z,11Z,14Z)-eicosatetraenoate + UDP-alpha-D-glucuronate = 20-O-(beta-D-glucuronosyl)-(5Z,8Z,11Z,14Z)-eicosatetraenoate + UDP + H(+). It catalyses the reaction prostaglandin B1 + UDP-alpha-D-glucuronate = 15-O-(beta-D-glucuronosyl)-prostaglandin B1 + UDP + H(+). The enzyme catalyses (E)-ferulate + UDP-alpha-D-glucuronate = (E)-4-O-(beta-D-glucuronosyl)-ferulate + UDP + H(+). The catalysed reaction is (E)-ferulate + UDP-alpha-D-glucuronate = (E)-ferulic acid beta-D-glucuronate ester + UDP. In terms of biological role, UDP-glucuronosyltransferase (UGT) that catalyzes phase II biotransformation reactions in which lipophilic substrates are conjugated with glucuronic acid to increase the metabolite's water solubility, thereby facilitating excretion into either the urine or bile. Essential for the elimination and detoxification of drugs, xenobiotics and endogenous compounds. Catalyzes the glucuronidation of endogenous estrogen hormones such as estradiol, estrone and estriol. Involved in the glucuronidation of bilirubin, a degradation product occurring in the normal catabolic pathway that breaks down heme in vertebrates. Involved in the glucuronidation of arachidonic acid (AA) and AA-derived eicosanoids including 15-HETE, 20-HETE, PGB1 and F2-isoprostane (8-iso-PGF2alpha). Involved in the glucuronidation of the phytochemical ferulic acid at the phenolic or the carboxylic acid group. Also catalyzes the glucuronidation the isoflavones genistein, daidzein, glycitein, formononetin, biochanin A and prunetin, which are phytoestrogens with anticancer and cardiovascular properties. Involved in the glucuronidation of the AGTR1 angiotensin receptor antagonist losartan, a drug which can inhibit the effect of angiotensin II. Involved in the biotransformation of 7-ethyl-10-hydroxycamptothecin (SN-38), the pharmacologically active metabolite of the anticancer drug irinotecan. The polypeptide is UDP-glucuronosyltransferase 1A1 (Mus musculus (Mouse)).